An 816-amino-acid chain; its full sequence is H(+)/Cl(-) exchange transporter 5 (816 aa).

Over 1 to 124 the chain is Cytoplasmic; the sequence is MAMWQGAMDN…WALIHSVSDA (124 aa). The next 2 helical transmembrane spans lie at 125–162 and 208–231; these read FSGWLLMLLIGLLSGSLAGLIDISAHWMTDLKEGICTG and VNYFMYVLWALLFAFLAVSLVKAF. Residues 237–241 carry the Selectivity filter part_1 motif; it reads GSGIP. Residue serine 238 coordinates chloride. The helical intramembrane region spans 240 to 247; it reads IPEIKTIL. Transmembrane regions (helical) follow at residues 256 to 275 and 281 to 300; these read LGKWTLVIKTITLVLAVSSG and EGPLVHVACCCGNILCHCFN. Positions 279-283 match the Selectivity filter part_2 motif; sequence GKEGP. Intramembrane regions (helical) lie at residues 312–324 and 328–336; these read VLSAAAAAGVSVA and PIGGVLFSL. A run of 5 helical transmembrane segments spans residues 348 to 366, 389 to 414, 422 to 442, 498 to 518, and 523 to 542; these read LWRSFFAALVAAFTLRSIN, LVPFIVLGIFGGLWGALFIRTNIAWC, LGKYPVVEVLIVTAITAILAF, MWQLALTLILKIVITIFTFGM, and GLFIPSMAVGAIAGRLLGVG. Residues 523 to 527 carry the Selectivity filter part_3 motif; that stretch reads GLFIP. Phenylalanine 525 serves as a coordination point for chloride. The segment at residues 570–584 is an intramembrane region (helical); the sequence is GLYAMVGAAACLGGV. Positions 585-587 form an intramembrane region, note=Loop between two helices; the sequence is TRM. The helical intramembrane region spans 588–599; sequence TVSLVVIMFELT. Residues 600–604 constitute an intramembrane region (note=Loop between two helices); sequence GGLEY. Residues 605-622 form a helical membrane-spanning segment; that stretch reads IVPLMAAAMTSKWVADAL. Residues 623-816 lie on the Cytoplasmic side of the membrane; the sequence is GREGIYDAHI…NQDPDSILFN (194 aa). Tyrosine 628 is a binding site for chloride. 2 CBS domains span residues 656–720 and 752–812; these read MKPR…ARKK and ILDL…DPDS. ATP is bound by residues threonine 666, 687-689, and 794-797; these read YSG and TKKD.

It belongs to the chloride channel (TC 2.A.49) family. ClC-5/CLCN5 subfamily. In terms of assembly, interacts with NEDD4 and NEDD4L. Post-translationally, ubiquitinated by NEDD4L in the presence of albumin; which promotes endocytosis and proteasomal degradation. Kidney specific.

Its subcellular location is the golgi apparatus membrane. It is found in the endosome membrane. The protein localises to the cell membrane. It carries out the reaction 2 chloride(in) + H(+)(out) = 2 chloride(out) + H(+)(in). In terms of biological role, proton-coupled chloride transporter. Functions as antiport system and exchanges chloride ions against protons. Important for normal acidification of the endosome lumen. May play an important role in renal tubular function. The CLC channel family contains both chloride channels and proton-coupled anion transporters that exchange chloride or another anion for protons. The absence of conserved gating glutamate residues is typical for family members that function as channels. This Mus musculus (Mouse) protein is H(+)/Cl(-) exchange transporter 5 (Clcn5).